Here is a 597-residue protein sequence, read N- to C-terminus: Exochitinase 1 (597 aa).

Residues 1-29 (MDRFRPLAVLIAAALTLSGTTALSSAARA) constitute a signal peptide (or 32). The 82-residue stretch at 172–253 (PPTGLRTGSV…ATVTATTAPG (82 aa)) folds into the Fibronectin type-III domain. Residues 264 to 597 (HALVGYLHAS…FQRTFDGYFG (334 aa)) form the GH18 domain. Residue Glu-384 is the Proton donor of the active site.

The protein belongs to the glycosyl hydrolase 18 family. Chitinase class II subfamily. The N-terminus is blocked.

It catalyses the reaction Random endo-hydrolysis of N-acetyl-beta-D-glucosaminide (1-&gt;4)-beta-linkages in chitin and chitodextrins.. Inhibited by the pseudosugar allosamidin A. In terms of biological role, exochitinase that generates exclusively chitobiose from chitotetraose, chitohexaose, and colloidal high-molecular mass chitin. This chain is Exochitinase 1 (chi01), found in Streptomyces olivaceoviridis (Streptomyces corchorusii).